We begin with the raw amino-acid sequence, 582 residues long: Probable inorganic phosphate transporter 1-9 (582 aa).

The Cytoplasmic segment spans residues 1–23; the sequence is MAPRIRVLAALDQARTQYYHFKA. The chain crosses the membrane as a helical span at residues 24–44; the sequence is IVIAGMGLFTDSYDLFCISPV. The Extracellular portion of the chain corresponds to 45–75; it reads MKIFGRVYYAPSGSVDGSGSGPGVTPPAVVS. A helical transmembrane segment spans residues 76–96; the sequence is ATVGVALLGAVAGNVVFGALG. Over 97-103 the chain is Cytoplasmic; the sequence is DRVGRRR. A helical transmembrane segment spans residues 104-124; the sequence is VYGACLLLMVCSSVGSGLSVC. At 125–130 the chain is on the extracellular side; that stretch reads RTRRCA. The chain crosses the membrane as a helical span at residues 131–151; it reads LASLCFFRFLLGVGVGGDYPL. Residues 152–165 are Cytoplasmic-facing; the sequence is SATIMSEFANRRTR. Residues 166 to 186 traverse the membrane as a helical segment; it reads GAFIAAVFSMQGFGILVSSAV. The Extracellular segment spans residues 187-210; sequence TMAVAAAFDHYTGYPAPLDTPECA. Residues 211–231 form a helical membrane-spanning segment; the sequence is DLAWRIILMAGAVPAALTYYW. At 232 to 307 the chain is on the cytoplasmic side; it reads RMSMPETARY…RRFVRQHGRD (76 aa). The helical transmembrane segment at 308–328 threads the bilayer; sequence LFACAAAWFLLDIPYYSSTLF. Topologically, residues 329–354 are extracellular; it reads QSQIYRPWFPPAAKVNAFQEAFNVAK. Residues 355–375 traverse the membrane as a helical segment; that stretch reads FQAVIAVASTIPGYFAAMLLI. Topologically, residues 376-385 are cytoplasmic; the sequence is ERAGRRRLQM. Residues 386 to 406 traverse the membrane as a helical segment; it reads AGFLLMAVFLFALAGPYDGYW. Over 407-415 the chain is Extracellular; that stretch reads RDHAKTAGY. A helical membrane pass occupies residues 416 to 436; the sequence is IVLYSLTFFSANLGPNTTTFI. The Cytoplasmic segment spans residues 437–451; the sequence is LPAELFPARFRSTCH. A helical transmembrane segment spans residues 452 to 472; it reads GLSGAAGKLGALVGSIGFLWA. Residues 473–485 lie on the Extracellular side of the membrane; that stretch reads SQQKDGAAAGHLP. The chain crosses the membrane as a helical span at residues 486-506; that stretch reads GIGMMYALFVLGGICLLGLAL. Topologically, residues 507–582 are cytoplasmic; the sequence is TYAFTPETMT…SPILPHRMSL (76 aa). Residues 519-541 form a disordered region; it reads LEENESSVQAQSQVGDGGSDAGN.

The protein belongs to the major facilitator superfamily. Phosphate:H(+) symporter (TC 2.A.1.9) family. Expressed at low levels in roots.

It localises to the membrane. Functionally, high-affinity transporter for external inorganic phosphate. The protein is Probable inorganic phosphate transporter 1-9 (PHT1-9) of Oryza sativa subsp. japonica (Rice).